The sequence spans 299 residues: Probable GTP 3',8-cyclase (299 aa).

One can recognise a Radical SAM core domain in the interval 4-229 (LHNREIKSLR…MQNRKKYLVD (226 aa)). Position 13 (arginine 13) interacts with GTP. [4Fe-4S] cluster is bound by residues cysteine 20 and cysteine 24. Tyrosine 26 lines the S-adenosyl-L-methionine pocket. Residue cysteine 27 coordinates [4Fe-4S] cluster. Lysine 61 is a binding site for GTP. Position 65 (glycine 65) interacts with S-adenosyl-L-methionine. Threonine 94 is a GTP binding site. Position 118 (serine 118) interacts with S-adenosyl-L-methionine. Lysine 154 contributes to the GTP binding site. [4Fe-4S] cluster-binding residues include cysteine 245 and cysteine 248. 250-252 (RIR) lines the GTP pocket. Residue cysteine 262 participates in [4Fe-4S] cluster binding.

This sequence belongs to the radical SAM superfamily. MoaA family. [4Fe-4S] cluster serves as cofactor.

It catalyses the reaction GTP + AH2 + S-adenosyl-L-methionine = (8S)-3',8-cyclo-7,8-dihydroguanosine 5'-triphosphate + 5'-deoxyadenosine + L-methionine + A + H(+). It participates in cofactor biosynthesis; molybdopterin biosynthesis. Functionally, catalyzes the cyclization of GTP to (8S)-3',8-cyclo-7,8-dihydroguanosine 5'-triphosphate. In Methanococcus aeolicus (strain ATCC BAA-1280 / DSM 17508 / OCM 812 / Nankai-3), this protein is Probable GTP 3',8-cyclase.